The primary structure comprises 69 residues: Putative membrane protein insertion efficiency factor (69 aa).

Belongs to the UPF0161 family.

It localises to the cell inner membrane. Its function is as follows. Could be involved in insertion of integral membrane proteins into the membrane. The chain is Putative membrane protein insertion efficiency factor from Nitrosomonas europaea (strain ATCC 19718 / CIP 103999 / KCTC 2705 / NBRC 14298).